A 183-amino-acid chain; its full sequence is Glutathione-regulated potassium-efflux system ancillary protein KefG (183 aa).

This sequence belongs to the NAD(P)H dehydrogenase (quinone) family. KefG subfamily. In terms of assembly, interacts with KefB.

It localises to the cell inner membrane. The catalysed reaction is a quinone + NADH + H(+) = a quinol + NAD(+). The enzyme catalyses a quinone + NADPH + H(+) = a quinol + NADP(+). In terms of biological role, regulatory subunit of a potassium efflux system that confers protection against electrophiles. Required for full activity of KefB. The protein is Glutathione-regulated potassium-efflux system ancillary protein KefG of Salmonella gallinarum (strain 287/91 / NCTC 13346).